The chain runs to 141 residues: Hemoglobin subunit alpha-1 (141 aa).

The Globin domain occupies 1–141; the sequence is VLSGSDKNNV…VGNVLTAKYR (141 aa). H58 is a binding site for O2. H87 serves as a coordination point for heme b.

It belongs to the globin family. Heterotetramer of two alpha chains and two beta chains. In terms of tissue distribution, red blood cells.

Involved in oxygen transport from the lung to the various peripheral tissues. The protein is Hemoglobin subunit alpha-1 of Stercorarius maccormicki (South polar skua).